A 197-amino-acid chain; its full sequence is MSLIRTETRDTKRAADPLHDLRSKPFSEWGEDEIRRFNLIDALLEFVYTDTSSPFGIGMTFDYTECWEIGVRDDCLVMTRVKPVHPEYAKHWNMKGVMNDKTRFHADKWVGYSKVLAWVSLSHKDTFTGAKRFQYFQTMYDMERQINANLPVGGLPNVDTERTGKLFQRDDFSEDSHANDPKLVGDDYVPQAPEQIN.

The span at 168 to 185 (QRDDFSEDSHANDPKLVG) shows a compositional bias: basic and acidic residues. Residues 168-197 (QRDDFSEDSHANDPKLVGDDYVPQAPEQIN) are disordered.

This is an uncharacterized protein from Escherichia coli (strain K12).